We begin with the raw amino-acid sequence, 102 residues long: Large ribosomal subunit protein bL21 (102 aa).

The protein belongs to the bacterial ribosomal protein bL21 family. Part of the 50S ribosomal subunit. Contacts protein L20.

Functionally, this protein binds to 23S rRNA in the presence of protein L20. The protein is Large ribosomal subunit protein bL21 of Zymomonas mobilis subsp. mobilis (strain ATCC 31821 / ZM4 / CP4).